The sequence spans 723 residues: Fatty acid oxidation complex subunit alpha (723 aa).

The segment at 1–189 is enoyl-CoA hydratase/isomerase; it reads MIYQANTLQV…KVGLLDAIVE (189 aa). D296 is a substrate binding site. The tract at residues 311–723 is 3-hydroxyacyl-CoA dehydrogenase; that stretch reads NKATERAAVL…FYDGQQASSL (413 aa). Residues M325, D344, 401-403, K408, and S430 contribute to the NAD(+) site; that span reads VVE. Catalysis depends on H451, which acts as the For 3-hydroxyacyl-CoA dehydrogenase activity. N454 is an NAD(+) binding site. The substrate site is built by N501 and Y661.

It in the N-terminal section; belongs to the enoyl-CoA hydratase/isomerase family. The protein in the C-terminal section; belongs to the 3-hydroxyacyl-CoA dehydrogenase family. In terms of assembly, heterotetramer of two alpha chains (FadB) and two beta chains (FadA).

The enzyme catalyses a (3S)-3-hydroxyacyl-CoA + NAD(+) = a 3-oxoacyl-CoA + NADH + H(+). The catalysed reaction is a (3S)-3-hydroxyacyl-CoA = a (2E)-enoyl-CoA + H2O. It catalyses the reaction a 4-saturated-(3S)-3-hydroxyacyl-CoA = a (3E)-enoyl-CoA + H2O. It carries out the reaction (3S)-3-hydroxybutanoyl-CoA = (3R)-3-hydroxybutanoyl-CoA. The enzyme catalyses a (3Z)-enoyl-CoA = a 4-saturated (2E)-enoyl-CoA. The catalysed reaction is a (3E)-enoyl-CoA = a 4-saturated (2E)-enoyl-CoA. Its pathway is lipid metabolism; fatty acid beta-oxidation. In terms of biological role, involved in the aerobic and anaerobic degradation of long-chain fatty acids via beta-oxidation cycle. Catalyzes the formation of 3-oxoacyl-CoA from enoyl-CoA via L-3-hydroxyacyl-CoA. It can also use D-3-hydroxyacyl-CoA and cis-3-enoyl-CoA as substrate. The chain is Fatty acid oxidation complex subunit alpha from Vibrio atlanticus (strain LGP32) (Vibrio splendidus (strain Mel32)).